Here is a 556-residue protein sequence, read N- to C-terminus: Potassium-transporting ATPase potassium-binding subunit (556 aa).

Helical transmembrane passes span 6 to 26 (AGLIFLAVLVAALVAVHVPLG), 65 to 85 (GVLAFSSVSIIFLFVLQLVQG), 133 to 153 (GLAVQNFVSAAVGMAVAVALV), 176 to 196 (LRILLPISIVGAVLLVAGGAI), 249 to 269 (PTAWTNWLEVFLILVIGFSLP), 283 to 303 (YAIASVMASLYLLSTGFMLWF), 378 to 398 (GLYGMLVLAVITVFVAGLMVG), 419 to 439 (YFLVTPLIVLTGTAIAMALPG), 483 to 503 (ALGLAMAFGRFLPIVLVLALA), and 526 to 546 (FVGMVAGVTLIVVALTFLPML).

This sequence belongs to the KdpA family. The system is composed of three essential subunits: KdpA, KdpB and KdpC.

The protein localises to the cell membrane. Its function is as follows. Part of the high-affinity ATP-driven potassium transport (or Kdp) system, which catalyzes the hydrolysis of ATP coupled with the electrogenic transport of potassium into the cytoplasm. This subunit binds the extracellular potassium ions and delivers the ions to the membrane domain of KdpB through an intramembrane tunnel. This chain is Potassium-transporting ATPase potassium-binding subunit, found in Mycolicibacterium paratuberculosis (strain ATCC BAA-968 / K-10) (Mycobacterium paratuberculosis).